The sequence spans 875 residues: Alanine--tRNA ligase (875 aa).

Residues H564, H568, C666, and H670 each coordinate Zn(2+).

Belongs to the class-II aminoacyl-tRNA synthetase family. Zn(2+) serves as cofactor.

It is found in the cytoplasm. It catalyses the reaction tRNA(Ala) + L-alanine + ATP = L-alanyl-tRNA(Ala) + AMP + diphosphate. In terms of biological role, catalyzes the attachment of alanine to tRNA(Ala) in a two-step reaction: alanine is first activated by ATP to form Ala-AMP and then transferred to the acceptor end of tRNA(Ala). Also edits incorrectly charged Ser-tRNA(Ala) and Gly-tRNA(Ala) via its editing domain. This is Alanine--tRNA ligase from Mannheimia succiniciproducens (strain KCTC 0769BP / MBEL55E).